Here is a 431-residue protein sequence, read N- to C-terminus: Enolase (431 aa).

Gln-166 serves as a coordination point for (2R)-2-phosphoglycerate. Catalysis depends on Glu-208, which acts as the Proton donor. The Mg(2+) site is built by Asp-245, Glu-288, and Asp-315. (2R)-2-phosphoglycerate-binding residues include Lys-340, Arg-369, Ser-370, and Lys-391. The active-site Proton acceptor is Lys-340.

It belongs to the enolase family. It depends on Mg(2+) as a cofactor.

The protein localises to the cytoplasm. It is found in the secreted. It localises to the cell surface. It catalyses the reaction (2R)-2-phosphoglycerate = phosphoenolpyruvate + H2O. It participates in carbohydrate degradation; glycolysis; pyruvate from D-glyceraldehyde 3-phosphate: step 4/5. Catalyzes the reversible conversion of 2-phosphoglycerate (2-PG) into phosphoenolpyruvate (PEP). It is essential for the degradation of carbohydrates via glycolysis. The chain is Enolase from Clostridium botulinum (strain Loch Maree / Type A3).